Reading from the N-terminus, the 136-residue chain is Large-conductance mechanosensitive channel (136 aa).

2 consecutive transmembrane segments (helical) span residues 9–29 (AFAV…GAAF) and 78–98 (FIQT…GVKA).

This sequence belongs to the MscL family. Homopentamer.

The protein localises to the cell inner membrane. Its function is as follows. Channel that opens in response to stretch forces in the membrane lipid bilayer. May participate in the regulation of osmotic pressure changes within the cell. In Azotobacter vinelandii (strain DJ / ATCC BAA-1303), this protein is Large-conductance mechanosensitive channel.